The following is a 136-amino-acid chain: 5-hydroxyisourate hydrolase (136 aa).

The N-terminal stretch at 1–20 (MKRYILATAIASLVAAPAMA) is a signal peptide. Substrate contacts are provided by His-31, Arg-69, and Tyr-133.

The protein belongs to the transthyretin family. 5-hydroxyisourate hydrolase subfamily. As to quaternary structure, homotetramer.

It is found in the periplasm. It carries out the reaction 5-hydroxyisourate + H2O = 5-hydroxy-2-oxo-4-ureido-2,5-dihydro-1H-imidazole-5-carboxylate + H(+). Its function is as follows. Catalyzes the hydrolysis of 5-hydroxyisourate (HIU) to 2-oxo-4-hydroxy-4-carboxy-5-ureidoimidazoline (OHCU). This chain is 5-hydroxyisourate hydrolase (hiuH), found in Salmonella typhi.